We begin with the raw amino-acid sequence, 540 residues long: Chaperonin GroEL 2 (540 aa).

Residues 30–33 (TLGP), Lys51, 87–91 (DGTTT), Gly415, 480–482 (NAL), and Asp496 contribute to the ATP site.

This sequence belongs to the chaperonin (HSP60) family. As to quaternary structure, forms a cylinder of 14 subunits composed of two heptameric rings stacked back-to-back. Interacts with the co-chaperonin GroES.

The protein localises to the cytoplasm. The catalysed reaction is ATP + H2O + a folded polypeptide = ADP + phosphate + an unfolded polypeptide.. Together with its co-chaperonin GroES, plays an essential role in assisting protein folding. The GroEL-GroES system forms a nano-cage that allows encapsulation of the non-native substrate proteins and provides a physical environment optimized to promote and accelerate protein folding. The chain is Chaperonin GroEL 2 from Protochlamydia amoebophila (strain UWE25).